The sequence spans 61 residues: Photosystem II reaction center protein K (61 aa).

A propeptide spanning residues 1 to 24 (MLNIFSLICICINSALHSSSFFFA) is cleaved from the precursor. The helical transmembrane segment at 40–60 (MPVIPVLFFLLALVWQAAVSF) threads the bilayer.

This sequence belongs to the PsbK family. As to quaternary structure, PSII is composed of 1 copy each of membrane proteins PsbA, PsbB, PsbC, PsbD, PsbE, PsbF, PsbH, PsbI, PsbJ, PsbK, PsbL, PsbM, PsbT, PsbX, PsbY, PsbZ, Psb30/Ycf12, at least 3 peripheral proteins of the oxygen-evolving complex and a large number of cofactors. It forms dimeric complexes.

Its subcellular location is the plastid. It localises to the chloroplast thylakoid membrane. Functionally, one of the components of the core complex of photosystem II (PSII). PSII is a light-driven water:plastoquinone oxidoreductase that uses light energy to abstract electrons from H(2)O, generating O(2) and a proton gradient subsequently used for ATP formation. It consists of a core antenna complex that captures photons, and an electron transfer chain that converts photonic excitation into a charge separation. This is Photosystem II reaction center protein K from Liriodendron tulipifera (Tuliptree).